A 924-amino-acid polypeptide reads, in one-letter code: Ubiquitin carboxyl-terminal hydrolase 15 (924 aa).

Positions 130, 133, 141, 144, 150, 154, 163, and 167 each coordinate Zn(2+). An MYND-type zinc finger spans residues 130–167; the sequence is CARCFGPAKTRCSRCKSVRYCSGKCQIIHWRVAHKDEC. Positions 226-236 are enriched in polar residues; it reads DITPQINTQGR. Disordered regions lie at residues 226–301 and 317–366; these read DITP…VDSS and SHKH…TSKK. Residues 247 to 256 show a composition bias toward basic and acidic residues; it reads ANRESCRRDS. The segment covering 331 to 362 has biased composition (polar residues); sequence GCPNTQYPSNGTRTATLPRTGINKSGEQSCTE. A USP domain is found at 438–744; it reads RGLVNCGNSC…GAYMLFYMRS (307 aa). The active-site Nucleophile is cysteine 447. The Proton acceptor role is filled by histidine 703. The disordered stretch occupies residues 750–793; the sequence is RGEHNGKAPVHHSQPRNEMKEQRKPVNRFKPRADHKNTESSSSE. A compositionally biased stretch (basic and acidic residues) spans 764–773; sequence PRNEMKEQRK.

The protein belongs to the peptidase C19 family. In terms of assembly, interacts with DA1. Highly expressed in rosette leaves and inflorescence. Expressed at low levels in cotyledons, stems, cauline leaves and siliques.

The protein resides in the cytoplasm. It localises to the nucleus. It catalyses the reaction Thiol-dependent hydrolysis of ester, thioester, amide, peptide and isopeptide bonds formed by the C-terminal Gly of ubiquitin (a 76-residue protein attached to proteins as an intracellular targeting signal).. Recognizes and hydrolyzes the peptide bond at the C-terminal Gly of ubiquitin. Involved in the processing of poly-ubiquitin precursors as well as that of ubiquitinated proteins. Involved in the regulation of organ size. Acts as a positive regulator of cell proliferation. Possesses deubiquitinating enzyme activity in vitro. The enzyme activity of UBP15 is required for its function in regulation of cell proliferation. Functions antagonistically in a common pathway with DA1 to regulate seed size. Acts maternally to regulate seed size by promoting cell proliferation in the integuments of ovules and developing seeds. Functions independently of DA2 and BB. The protein is Ubiquitin carboxyl-terminal hydrolase 15 of Arabidopsis thaliana (Mouse-ear cress).